Consider the following 31-residue polypeptide: U14-ctenitoxin-Co1c (31 aa).

As to expression, expressed by the venom gland.

Its subcellular location is the secreted. Its function is as follows. Not toxic to mice by intracerebroventricular injection. In Ctenus ornatus (Brazilian spider), this protein is U14-ctenitoxin-Co1c.